The following is a 461-amino-acid chain: Cysteine--tRNA ligase (461 aa).

Cys28 serves as a coordination point for Zn(2+). The short motif at 30–40 (ITVYDLCHIGH) is the 'HIGH' region element. Zn(2+) is bound by residues Cys209, His234, and Glu238. The 'KMSKS' region signature appears at 266 to 270 (KMSKS). Lys269 contributes to the ATP binding site.

The protein belongs to the class-I aminoacyl-tRNA synthetase family. In terms of assembly, monomer. Zn(2+) serves as cofactor.

The protein localises to the cytoplasm. The catalysed reaction is tRNA(Cys) + L-cysteine + ATP = L-cysteinyl-tRNA(Cys) + AMP + diphosphate. The sequence is that of Cysteine--tRNA ligase from Escherichia fergusonii (strain ATCC 35469 / DSM 13698 / CCUG 18766 / IAM 14443 / JCM 21226 / LMG 7866 / NBRC 102419 / NCTC 12128 / CDC 0568-73).